A 146-amino-acid chain; its full sequence is Bifunctional adenosine 5'-phosphosulfate phosphorylase/adenylylsulfatase HINT4 (146 aa).

Residues 9–120 (IFCEIVRNPT…YVPRWKAIKY (112 aa)) form the HIT domain. Positions 101–105 (HLHLH) match the Histidine triad motif motif. Residue His-105 is the Tele-AMP-histidine intermediate of the active site.

As to quaternary structure, homodimer.

It localises to the peroxisome. It carries out the reaction sulfate + ADP + H(+) = adenosine 5'-phosphosulfate + phosphate. The enzyme catalyses adenosine 5'-phosphosulfate + H2O = sulfate + AMP + 2 H(+). Its activity is regulated as follows. The adenosine 5'-phosphosulfate phosphorylase activity is enhanced at low pH. Its function is as follows. Possesses adenylylsulfatase activity in vitro, releasing AMP and sulfate from adenylyl sulfate. Also possesses adenosine 5'-phosphosulfate (APS) phosphorylase activity in vitro. Catalyzes the phosphorolysis of APS, leading to ADP and sulfate. The sequence is that of Bifunctional adenosine 5'-phosphosulfate phosphorylase/adenylylsulfatase HINT4 from Arabidopsis thaliana (Mouse-ear cress).